The chain runs to 230 residues: 5'-methylthioadenosine/S-adenosylhomocysteine nucleosidase (230 aa).

Glu-12 serves as the catalytic Proton acceptor. Substrate is bound by residues Gly-78, Met-153, and Met-174 to Glu-175. The Proton donor role is filled by Asp-198.

This sequence belongs to the PNP/UDP phosphorylase family. MtnN subfamily.

The catalysed reaction is S-adenosyl-L-homocysteine + H2O = S-(5-deoxy-D-ribos-5-yl)-L-homocysteine + adenine. It carries out the reaction S-methyl-5'-thioadenosine + H2O = 5-(methylsulfanyl)-D-ribose + adenine. The enzyme catalyses 5'-deoxyadenosine + H2O = 5-deoxy-D-ribose + adenine. Its pathway is amino-acid biosynthesis; L-methionine biosynthesis via salvage pathway; S-methyl-5-thio-alpha-D-ribose 1-phosphate from S-methyl-5'-thioadenosine (hydrolase route): step 1/2. Functionally, catalyzes the irreversible cleavage of the glycosidic bond in both 5'-methylthioadenosine (MTA) and S-adenosylhomocysteine (SAH/AdoHcy) to adenine and the corresponding thioribose, 5'-methylthioribose and S-ribosylhomocysteine, respectively. Also cleaves 5'-deoxyadenosine, a toxic by-product of radical S-adenosylmethionine (SAM) enzymes, into 5-deoxyribose and adenine. The sequence is that of 5'-methylthioadenosine/S-adenosylhomocysteine nucleosidase from Lysinibacillus sphaericus (strain C3-41).